Here is a 473-residue protein sequence, read N- to C-terminus: Adenosylhomocysteinase (473 aa).

Substrate-binding residues include T64, D139, and E199. Residue 200-202 (TTT) participates in NAD(+) binding. Residues K229 and D233 each contribute to the substrate site. Residues N234, 263–268 (GYGDVG), E286, N321, 342–344 (IGH), and N387 contribute to the NAD(+) site.

This sequence belongs to the adenosylhomocysteinase family. It depends on NAD(+) as a cofactor.

The protein resides in the cytoplasm. The catalysed reaction is S-adenosyl-L-homocysteine + H2O = L-homocysteine + adenosine. Its pathway is amino-acid biosynthesis; L-homocysteine biosynthesis; L-homocysteine from S-adenosyl-L-homocysteine: step 1/1. May play a key role in the regulation of the intracellular concentration of adenosylhomocysteine. The sequence is that of Adenosylhomocysteinase from Paraburkholderia xenovorans (strain LB400).